Here is a 231-residue protein sequence, read N- to C-terminus: Large ribosomal subunit protein uL1 (231 aa).

Belongs to the universal ribosomal protein uL1 family. In terms of assembly, part of the 50S ribosomal subunit.

Functionally, binds directly to 23S rRNA. The L1 stalk is quite mobile in the ribosome, and is involved in E site tRNA release. In terms of biological role, protein L1 is also a translational repressor protein, it controls the translation of the L11 operon by binding to its mRNA. This chain is Large ribosomal subunit protein uL1, found in Clostridium kluyveri (strain NBRC 12016).